The following is a 303-amino-acid chain: Recombination-associated protein RdgC (303 aa).

The protein belongs to the RdgC family.

The protein localises to the cytoplasm. It is found in the nucleoid. Its function is as follows. May be involved in recombination. This chain is Recombination-associated protein RdgC, found in Shewanella halifaxensis (strain HAW-EB4).